The following is a 276-amino-acid chain: Dermonecrotic toxin LlSicTox-alphaIV1ii (276 aa).

The active site involves His5. Residues Glu25 and Asp27 each contribute to the Mg(2+) site. The Nucleophile role is filled by His41. 2 disulfide bridges follow: Cys45–Cys51 and Cys47–Cys193. Residue Asp85 participates in Mg(2+) binding.

This sequence belongs to the arthropod phospholipase D family. Class II subfamily. The cofactor is Mg(2+). Expressed by the venom gland.

It localises to the secreted. It catalyses the reaction an N-(acyl)-sphingosylphosphocholine = an N-(acyl)-sphingosyl-1,3-cyclic phosphate + choline. The enzyme catalyses an N-(acyl)-sphingosylphosphoethanolamine = an N-(acyl)-sphingosyl-1,3-cyclic phosphate + ethanolamine. It carries out the reaction a 1-acyl-sn-glycero-3-phosphocholine = a 1-acyl-sn-glycero-2,3-cyclic phosphate + choline. The catalysed reaction is a 1-acyl-sn-glycero-3-phosphoethanolamine = a 1-acyl-sn-glycero-2,3-cyclic phosphate + ethanolamine. Its function is as follows. Dermonecrotic toxins cleave the phosphodiester linkage between the phosphate and headgroup of certain phospholipids (sphingolipid and lysolipid substrates), forming an alcohol (often choline) and a cyclic phosphate. This toxin acts on sphingomyelin (SM). It may also act on ceramide phosphoethanolamine (CPE), lysophosphatidylcholine (LPC) and lysophosphatidylethanolamine (LPE), but not on lysophosphatidylserine (LPS), and lysophosphatidylglycerol (LPG). It acts by transphosphatidylation, releasing exclusively cyclic phosphate products as second products. Induces dermonecrosis, hemolysis, increased vascular permeability, edema, inflammatory response, and platelet aggregation. This is Dermonecrotic toxin LlSicTox-alphaIV1ii from Loxosceles laeta (South American recluse spider).